A 212-amino-acid polypeptide reads, in one-letter code: Transmembrane protein 186 (212 aa).

Residues Met1–Thr78 lie on the Mitochondrial matrix side of the membrane. A helical transmembrane segment spans residues Ala79–Phe99. At Ser100–Ser101 the chain is on the mitochondrial intermembrane side. A helical membrane pass occupies residues Leu102 to Phe122. Topologically, residues Phe123 to Lys212 are mitochondrial matrix.

It belongs to the TMEM186 family. As to quaternary structure, part of the mitochondrial complex I assembly/MCIA complex that comprises at least the core subunits TMEM126B, NDUFAF1, ECSIT and ACAD9 and complement subunits such as COA1 and TMEM186. Interacts with MT-ND3.

It localises to the mitochondrion inner membrane. Functionally, as part of the MCIA complex, required for efficient assembly of the mitochondrial complex I. The polypeptide is Transmembrane protein 186 (Bos taurus (Bovine)).